The primary structure comprises 179 residues: MIAQKSVRDYIRTIPDFPHDGILFRDVTTLFQDPRGFRLAVDQLLSPFVGETIDAVAGLEARGFILGGAVAHQLSKGFVSVRKKGKLPAATIEQAYKLEYGEAVVEIHDDAVQPGDKVLIVDDLLATGGTAEAGIKLIERLGAEVIGCAFVIDLPDLGGRAKVEAMGVPVHAICAYDGL.

Belongs to the purine/pyrimidine phosphoribosyltransferase family. Homodimer.

Its subcellular location is the cytoplasm. It catalyses the reaction AMP + diphosphate = 5-phospho-alpha-D-ribose 1-diphosphate + adenine. Its pathway is purine metabolism; AMP biosynthesis via salvage pathway; AMP from adenine: step 1/1. Catalyzes a salvage reaction resulting in the formation of AMP, that is energically less costly than de novo synthesis. This chain is Adenine phosphoribosyltransferase, found in Jannaschia sp. (strain CCS1).